The chain runs to 126 residues: SNRPMPLNTYQFKNMIQCTVPKRSWWDFADYGCYCGRGGSGTPIDDLDRCCQVHDNCYNSAREQGGCRPKQKTYSYECKAGTLSCSGSNNSCAATVCDCDRLAAICFAGAPYNDNNYNIDLKARCQ.

Residues 1–7 constitute a propeptide that is removed on maturation; sequence SNRPMPL. Cystine bridges form between C18/C78, C33/C125, C35/C51, C50/C106, C57/C99, C67/C92, and C85/C97. Ca(2+) is bound by residues Y34, G36, and G38. Residue H54 is part of the active site. Residue D55 participates in Ca(2+) binding. Residue D100 is part of the active site.

The protein belongs to the phospholipase A2 family. Group I subfamily. D49 sub-subfamily. In terms of assembly, heterodimer formed between two homologous isoforms: isoform 1 and isoform 2. Ca(2+) serves as cofactor. As to expression, expressed by the venom gland.

It is found in the secreted. The catalysed reaction is a 1,2-diacyl-sn-glycero-3-phosphocholine + H2O = a 1-acyl-sn-glycero-3-phosphocholine + a fatty acid + H(+). PLA2 catalyzes the calcium-dependent hydrolysis of the 2-acyl groups in 3-sn-phosphoglycerides. The sequence is that of Basic phospholipase A2 1 from Naja sagittifera (Andaman cobra).